A 551-amino-acid polypeptide reads, in one-letter code: Inosine-5'-monophosphate dehydrogenase (551 aa).

CBS domains are found at residues 102-163 and 165-221; these read FILD…PLSE and MTSD…PLAS. NAD(+) contacts are provided by residues 258–260 and 308–310; these read DSS and GMG. K(+)-binding residues include Gly310 and Gly312. Ser313 lines the IMP pocket. Cys315 is a K(+) binding site. The active-site Thioimidate intermediate is the Cys315. IMP-binding positions include 349-351, 372-373, and 396-400; these read DGG, GS, and YRGMG. The disordered stretch occupies residues 407-462; that stretch reads AGTRRTASPPARGLRSPEASPSTAASSGGASRASALSEASPSAKSEASRTSTSTGS. The segment covering 422–462 has biased composition (low complexity); the sequence is SPEASPSTAASSGGASRASALSEASPSAKSEASRTSTSTGS. Arg465 functions as the Proton acceptor in the catalytic mechanism. Gln477 serves as a coordination point for IMP. Glu536 and Gly537 together coordinate K(+).

Belongs to the IMPDH/GMPR family. In terms of assembly, homotetramer. Requires K(+) as cofactor.

It localises to the cytoplasm. The enzyme catalyses IMP + NAD(+) + H2O = XMP + NADH + H(+). It functions in the pathway purine metabolism; XMP biosynthesis via de novo pathway; XMP from IMP: step 1/1. With respect to regulation, mycophenolic acid (MPA) is a non-competitive inhibitor that prevents formation of the closed enzyme conformation by binding to the same site as the amobile flap. In contrast, mizoribine monophosphate (MZP) is a competitive inhibitor that induces the closed conformation. MPA is a potent inhibitor of mammalian IMPDHs but a poor inhibitor of the bacterial enzymes. MZP is a more potent inhibitor of bacterial IMPDH. Potently inhibited by MPA and adenine dinucleotide analogs such as thiazole-4-carboxamide adenine dinucleotide (TAD). Its function is as follows. Catalyzes the conversion of inosine 5'-phosphate (IMP) to xanthosine 5'-phosphate (XMP), the first committed and rate-limiting step in the de novo synthesis of guanine nucleotides, and therefore plays an important role in the regulation of cell growth. In Toxoplasma gondii, this protein is Inosine-5'-monophosphate dehydrogenase.